Reading from the N-terminus, the 75-residue chain is UPF0352 protein YejL (75 aa).

The protein belongs to the UPF0352 family.

The sequence is that of UPF0352 protein YejL from Escherichia coli O139:H28 (strain E24377A / ETEC).